Reading from the N-terminus, the 371-residue chain is Leu/Ile/Val-binding protein homolog 1 (371 aa).

An N-terminal signal peptide occupies residues 1 to 23; the sequence is MRKTLFSGVALAAVIAFGGSAWA.

It belongs to the leucine-binding protein family.

Functionally, component of an amino-acid transport system. The protein is Leu/Ile/Val-binding protein homolog 1 of Brucella abortus (strain 2308).